The primary structure comprises 391 residues: Casein kinase II subunit alpha (391 aa).

Residues 36 to 41 are interaction with beta subunit; sequence QDDYQL. The 286-residue stretch at 39–324 folds into the Protein kinase domain; the sequence is YQLVRKLGRG…AREAMEHPYF (286 aa). ATP is bound by residues 45–53 and K68; that span reads LGRGKYSEV. D156 functions as the Proton acceptor in the catalytic mechanism. Phosphothreonine; by CDK1 is present on residues T344 and T360. S362 and S370 each carry phosphoserine; by CDK1.

The protein belongs to the protein kinase superfamily. Ser/Thr protein kinase family. CK2 subfamily. As to quaternary structure, heterotetramer composed of two catalytic subunits (alpha chain and/or alpha' chain) and two regulatory subunits (beta chains). The tetramer can exist as a combination of 2 alpha/2 beta, 2 alpha'/2 beta or 1 alpha/1 alpha'/2 beta subunits. Also part of a CK2-SPT16-SSRP1 complex composed of SSRP1, SUPT16H, CSNK2A1, CSNK2A2 and CSNK2B, which forms following UV irradiation. Interacts with RNPS1. Interacts with SNAI1. Interacts with PML. Interacts with CCAR2. Interacts with HIRIP3. Post-translationally, phosphorylated at Thr-344, Thr-360, Ser-362 and Ser-370 by CDK1 in prophase and metaphase and dephosphorylated during anaphase. Phosphorylation does not directly affect casein kinase 2 activity, but may contribute to its regulation by forming binding sites for interacting proteins and/or targeting it to different compartments.

It is found in the nucleus. The enzyme catalyses L-seryl-[protein] + ATP = O-phospho-L-seryl-[protein] + ADP + H(+). It catalyses the reaction L-threonyl-[protein] + ATP = O-phospho-L-threonyl-[protein] + ADP + H(+). With respect to regulation, constitutively active protein kinase whose activity is not directly affected by phosphorylation. Seems to be regulated by level of expression and localization. Functionally, catalytic subunit of a constitutively active serine/threonine-protein kinase complex that phosphorylates a large number of substrates containing acidic residues C-terminal to the phosphorylated serine or threonine. Regulates numerous cellular processes, such as cell cycle progression, apoptosis and transcription, as well as viral infection. May act as a regulatory node which integrates and coordinates numerous signals leading to an appropriate cellular response. During mitosis, functions as a component of the p53/TP53-dependent spindle assembly checkpoint (SAC) that maintains cyclin-B-CDK1 activity and G2 arrest in response to spindle damage. Also required for p53/TP53-mediated apoptosis, phosphorylating 'Ser-392' of p53/TP53 following UV irradiation. Phosphorylates a number of DNA repair proteins in response to DNA damage, such as MDC1, MRE11, RAD9A, RAD51 and HTATSF1, promoting their recruitment to DNA damage sites. Can also negatively regulate apoptosis. Phosphorylates the caspases CASP9 and CASP2 and the apoptotic regulator NOL3. Phosphorylation protects CASP9 from cleavage and activation by CASP8, and inhibits the dimerization of CASP2 and activation of CASP8. Phosphorylates YY1, protecting YY1 from cleavage by CASP7 during apoptosis. Regulates transcription by direct phosphorylation of RNA polymerases I, II, III and IV. Also phosphorylates and regulates numerous transcription factors including NF-kappa-B, STAT1, CREB1, IRF1, IRF2, ATF1, ATF4, SRF, MAX, JUN, FOS, MYC and MYB. Phosphorylates Hsp90 and its co-chaperones FKBP4 and CDC37, which is essential for chaperone function. Mediates sequential phosphorylation of FNIP1, promoting its gradual interaction with Hsp90, leading to activate both kinase and non-kinase client proteins of Hsp90. Regulates Wnt signaling by phosphorylating CTNNB1 and the transcription factor LEF1. Acts as an ectokinase that phosphorylates several extracellular proteins. Plays an important role in the circadian clock function by phosphorylating BMAL1 at 'Ser-90' which is pivotal for its interaction with CLOCK and which controls CLOCK nuclear entry. Phosphorylates FMR1, promoting FMR1-dependent formation of a membraneless compartment. May phosphorylate histone H2A on 'Ser-1'. The chain is Casein kinase II subunit alpha (CSNK2A1) from Bos taurus (Bovine).